The sequence spans 200 residues: NAD(P)H dehydrogenase (quinone) (200 aa).

One can recognise a Flavodoxin-like domain in the interval 4–191 (VLVLYYSSYG…DIARYQGKRV (188 aa)). FMN is bound by residues 10-15 (SSYGHV) and 79-81 (TRF). Tyrosine 12 contributes to the NAD(+) binding site. Tryptophan 99 lines the substrate pocket. Residues 114–120 (STGTQHG) and histidine 135 each bind FMN.

Belongs to the WrbA family. It depends on FMN as a cofactor.

It catalyses the reaction a quinone + NADH + H(+) = a quinol + NAD(+). It carries out the reaction a quinone + NADPH + H(+) = a quinol + NADP(+). The chain is NAD(P)H dehydrogenase (quinone) from Burkholderia lata (strain ATCC 17760 / DSM 23089 / LMG 22485 / NCIMB 9086 / R18194 / 383).